The following is a 261-amino-acid chain: Acyl-[acyl-carrier-protein]--UDP-N-acetylglucosamine O-acyltransferase (261 aa).

This sequence belongs to the transferase hexapeptide repeat family. LpxA subfamily. As to quaternary structure, homotrimer.

The protein resides in the cytoplasm. The enzyme catalyses a (3R)-hydroxyacyl-[ACP] + UDP-N-acetyl-alpha-D-glucosamine = a UDP-3-O-[(3R)-3-hydroxyacyl]-N-acetyl-alpha-D-glucosamine + holo-[ACP]. Its pathway is glycolipid biosynthesis; lipid IV(A) biosynthesis; lipid IV(A) from (3R)-3-hydroxytetradecanoyl-[acyl-carrier-protein] and UDP-N-acetyl-alpha-D-glucosamine: step 1/6. Involved in the biosynthesis of lipid A, a phosphorylated glycolipid that anchors the lipopolysaccharide to the outer membrane of the cell. The protein is Acyl-[acyl-carrier-protein]--UDP-N-acetylglucosamine O-acyltransferase of Sulfurimonas denitrificans (strain ATCC 33889 / DSM 1251) (Thiomicrospira denitrificans (strain ATCC 33889 / DSM 1251)).